The following is a 215-amino-acid chain: Large ribosomal subunit protein bL25 (215 aa).

The segment at 174–215 is disordered; it reads ETVVTVQPPATEKEEETEAAVTDSEPEVINEKEEPAEEAKEE. The segment covering 186–215 has biased composition (acidic residues); the sequence is KEEETEAAVTDSEPEVINEKEEPAEEAKEE.

The protein belongs to the bacterial ribosomal protein bL25 family. CTC subfamily. In terms of assembly, part of the 50S ribosomal subunit; part of the 5S rRNA/L5/L18/L25 subcomplex. Contacts the 5S rRNA. Binds to the 5S rRNA independently of L5 and L18.

In terms of biological role, this is one of the proteins that binds to the 5S RNA in the ribosome where it forms part of the central protuberance. The polypeptide is Large ribosomal subunit protein bL25 (Halalkalibacterium halodurans (strain ATCC BAA-125 / DSM 18197 / FERM 7344 / JCM 9153 / C-125) (Bacillus halodurans)).